Reading from the N-terminus, the 239-residue chain is Uridylate kinase (239 aa).

Residue Lys-12–Gly-15 coordinates ATP. Gly-53 is a UMP binding site. Positions 54 and 58 each coordinate ATP. Residues Asp-73 and Thr-135 to Thr-142 contribute to the UMP site. ATP contacts are provided by Thr-162, Tyr-168, and Asp-171.

It belongs to the UMP kinase family. As to quaternary structure, homohexamer.

Its subcellular location is the cytoplasm. It catalyses the reaction UMP + ATP = UDP + ADP. Its pathway is pyrimidine metabolism; CTP biosynthesis via de novo pathway; UDP from UMP (UMPK route): step 1/1. Its activity is regulated as follows. Inhibited by UTP. Catalyzes the reversible phosphorylation of UMP to UDP. The protein is Uridylate kinase of Ruthia magnifica subsp. Calyptogena magnifica.